Consider the following 220-residue polypeptide: Phosphoribosylformylglycinamidine synthase subunit PurQ (220 aa).

The 219-residue stretch at 2–220 folds into the Glutamine amidotransferase type-1 domain; that stretch reads RVGVVVFPGS…LRSVLAGAKV (219 aa). Cys-85 functions as the Nucleophile in the catalytic mechanism. Residues His-193 and Glu-195 contribute to the active site.

As to quaternary structure, part of the FGAM synthase complex composed of 1 PurL, 1 PurQ and 2 PurS subunits.

It is found in the cytoplasm. The enzyme catalyses N(2)-formyl-N(1)-(5-phospho-beta-D-ribosyl)glycinamide + L-glutamine + ATP + H2O = 2-formamido-N(1)-(5-O-phospho-beta-D-ribosyl)acetamidine + L-glutamate + ADP + phosphate + H(+). The catalysed reaction is L-glutamine + H2O = L-glutamate + NH4(+). It participates in purine metabolism; IMP biosynthesis via de novo pathway; 5-amino-1-(5-phospho-D-ribosyl)imidazole from N(2)-formyl-N(1)-(5-phospho-D-ribosyl)glycinamide: step 1/2. Its function is as follows. Part of the phosphoribosylformylglycinamidine synthase complex involved in the purines biosynthetic pathway. Catalyzes the ATP-dependent conversion of formylglycinamide ribonucleotide (FGAR) and glutamine to yield formylglycinamidine ribonucleotide (FGAM) and glutamate. The FGAM synthase complex is composed of three subunits. PurQ produces an ammonia molecule by converting glutamine to glutamate. PurL transfers the ammonia molecule to FGAR to form FGAM in an ATP-dependent manner. PurS interacts with PurQ and PurL and is thought to assist in the transfer of the ammonia molecule from PurQ to PurL. This is Phosphoribosylformylglycinamidine synthase subunit PurQ from Rubrobacter xylanophilus (strain DSM 9941 / JCM 11954 / NBRC 16129 / PRD-1).